The following is a 358-amino-acid chain: Serine/threonine-protein phosphatase 2A activator 2 (358 aa).

It belongs to the PTPA-type PPIase family.

It localises to the cytoplasm. The catalysed reaction is [protein]-peptidylproline (omega=180) = [protein]-peptidylproline (omega=0). Its function is as follows. PPIases accelerate the folding of proteins. It catalyzes the cis-trans isomerization of proline imidic peptide bonds in oligopeptides. Acts as a regulatory subunit for PP2A-like phosphatases modulating their activity or substrate specificity, probably by inducing a conformational change in the catalytic subunit, a direct target of the PPIase. Can reactivate inactive phosphatase PP2A-phosphatase methylesterase complexes (PP2Ai) in presence of ATP and Mg(2+) by dissociating the inactive form from the complex. This Candida albicans (strain SC5314 / ATCC MYA-2876) (Yeast) protein is Serine/threonine-protein phosphatase 2A activator 2 (RRD2).